The chain runs to 711 residues: Far upstream element-binding protein 2 (711 aa).

The interval 1 to 147 is disordered; the sequence is MSDYSTGGPP…HPPPRTSMTE (147 aa). Position 2 is an N-acetylserine (Ser2). The segment covering 8 to 17 has biased composition (pro residues); sequence GPPPGPPPPA. 2 stretches are compositionally biased toward gly residues: residues 18-28 and 36-68; these read GGGGGAGGAGG and GAGD…GGPG. Arg40 is modified (omega-N-methylarginine). An N6-acetyllysine modification is found at Lys87. Ser99 carries the phosphoserine modification. Thr100 carries the phosphothreonine modification. A compositionally biased stretch (basic and acidic residues) spans 110–122; it reads RQLEDGDQPESKK. Lys121 participates in a covalent cross-link: Glycyl lysine isopeptide (Lys-Gly) (interchain with G-Cter in SUMO1); alternate. Residue Lys121 forms a Glycyl lysine isopeptide (Lys-Gly) (interchain with G-Cter in SUMO2); alternate linkage. Residues Ser125, Ser129, Ser131, Ser181, Ser184, Ser193, and Ser274 each carry the phosphoserine modification. KH domains are found at residues 144-208, 233-299, and 322-386; these read SMTE…KMML, GTVQ…CEMV, and GGGI…ARII. Residues 392 to 429 form a disordered region; the sequence is SLRSGPPGPPGGPGMPPGGRGRGRGQGNWGPPGGEMTF. Residues 397-407 show a composition bias toward pro residues; the sequence is PPGPPGGPGMP. Over residues 408–424 the composition is skewed to gly residues; it reads PGGRGRGRGQGNWGPPG. Omega-N-methylarginine is present on residues Arg411, Arg413, Arg415, and Arg442. Residues 424 to 491 enclose the KH 4 domain; the sequence is GGEMTFSIPT…QQIDHAKQLI (68 aa). Ser480 carries the post-translational modification Phosphoserine. The disordered stretch occupies residues 497-569; the sequence is GPLCPVGPGP…HDPSKAAAAA (73 aa). 2 stretches are compositionally biased toward pro residues: residues 501–520 and 528–542; these read PVGP…PFNP and PGAP…PHQY. Repeat 1 spans residues 571–582; the sequence is DPNAAWAAYYSH. The 4 X 12 AA imperfect repeats stretch occupies residues 571-684; sequence DPNAAWAAYY…SAAWAEYYRQ (114 aa). The interval 583 to 711 is disordered; it reads YYQQPPGPVP…PTQQGQQQAQ (129 aa). Residues 587 to 613 show a composition bias toward pro residues; that stretch reads PPGPVPGPAPAPAAPPAQGEPPQPPPT. A run of 3 repeats spans residues 617–628, 643–654, and 673–684.

It belongs to the KHSRP family. As to quaternary structure, part of a ternary complex containing FUBP2, PTBP1, PTBP2 and HNRPH1. Interacts with PARN. Interacts with PQBP1. Phosphorylation at Ser-193 leads to the unfolding of the unstable KH domain 1, creating a site for 14-3-3 YWHAZ binding, which promotes nuclear localization and impairs the RNA degradation function. As to expression, detected in neural and non-neural cell lines.

It localises to the nucleus. Its subcellular location is the cytoplasm. Its function is as follows. Binds to the dendritic targeting element and may play a role in mRNA trafficking. Part of a ternary complex that binds to the downstream control sequence (DCS) of the pre-mRNA. Mediates exon inclusion in transcripts that are subject to tissue-specific alternative splicing. May interact with single-stranded DNA from the far-upstream element (FUSE). May activate gene expression. Also involved in degradation of inherently unstable mRNAs that contain AU-rich elements (AREs) in their 3'-UTR, possibly by recruiting degradation machinery to ARE-containing mRNAs. This chain is Far upstream element-binding protein 2 (KHSRP), found in Homo sapiens (Human).